Reading from the N-terminus, the 329-residue chain is 4-hydroxythreonine-4-phosphate dehydrogenase (329 aa).

Substrate is bound by residues His136 and Thr137. 3 residues coordinate a divalent metal cation: His166, His211, and His266. Substrate-binding residues include Lys274, Asn283, and Arg292.

The protein belongs to the PdxA family. Homodimer. Zn(2+) serves as cofactor. Mg(2+) is required as a cofactor. The cofactor is Co(2+).

It is found in the cytoplasm. It carries out the reaction 4-(phosphooxy)-L-threonine + NAD(+) = 3-amino-2-oxopropyl phosphate + CO2 + NADH. It participates in cofactor biosynthesis; pyridoxine 5'-phosphate biosynthesis; pyridoxine 5'-phosphate from D-erythrose 4-phosphate: step 4/5. In terms of biological role, catalyzes the NAD(P)-dependent oxidation of 4-(phosphooxy)-L-threonine (HTP) into 2-amino-3-oxo-4-(phosphooxy)butyric acid which spontaneously decarboxylates to form 3-amino-2-oxopropyl phosphate (AHAP). The protein is 4-hydroxythreonine-4-phosphate dehydrogenase of Neisseria meningitidis serogroup B (strain ATCC BAA-335 / MC58).